We begin with the raw amino-acid sequence, 236 residues long: MTAEFLSLLCLGLCLGYEDEKKNEKPPKPSLHAWPSSVVEAESNVTLKCQAHSQNVTFVLRKVNDSGYKQEQSSAENEAEFPFTDLKPKDAGRYFCAYKTTASHEWSESSEHLQLVVTDKHDELEAPSMKTDTRTIFVAIFSCISILLLFLSVFIIYRCSQHSSSSEESTKRTSHSKLPEQEAAEADLSNMERVSLSTADPQGVTYAELSTSALSEAASDTTQEPPGSHEYAALKV.

An N-terminal signal peptide occupies residues 1-16; that stretch reads MTAEFLSLLCLGLCLG. Topologically, residues 17–135 are extracellular; sequence YEDEKKNEKP…APSMKTDTRT (119 aa). Positions 27–114 constitute an Ig-like V-type domain; the sequence is PKPSLHAWPS…EWSESSEHLQ (88 aa). Residues asparagine 44 and asparagine 55 are each glycosylated (N-linked (GlcNAc...) asparagine). Cysteines 49 and 96 form a disulfide. The helical transmembrane segment at 136-156 threads the bilayer; that stretch reads IFVAIFSCISILLLFLSVFII. Over 157 to 236 the chain is Cytoplasmic; that stretch reads YRCSQHSSSS…GSHEYAALKV (80 aa). The disordered stretch occupies residues 166–200; that stretch reads SEESTKRTSHSKLPEQEAAEADLSNMERVSLSTAD. Short sequence motifs (ITIM motif) lie at residues 204 to 209 and 229 to 234; these read VTYAEL and HEYAAL. The tract at residues 215–236 is disordered; that stretch reads SEAASDTTQEPPGSHEYAALKV.

In terms of processing, isoform 2 is N-glycosylated. As to expression, expressed on myeloid (neutrophils, eosinophils and monocytes) but not on lymphoid cells.

The protein localises to the membrane. It is found in the secreted. Functionally, behaves as a cytokine, promoting IL17A secretion by CD4+ T-cells, and differentiation and activation of IL17 producing helper T-cells (TH17). Inhibitory immune receptor involved in the regulation of phagocytes. The protein is V-set and transmembrane domain-containing protein 1 (VSTM1) of Homo sapiens (Human).